We begin with the raw amino-acid sequence, 345 residues long: MQLDDRKLKILQAIIRNYLETGEPVGSRTISKYTDLNLSSATIRNEMSDLEELGYIIQPHTSAGRIPSDKGYRLYVDTMMEDKVTEVENMRDMLLEKADKMETLLQQVARLLAVNTNYATMVTSPQYRSRKVKFLQVSEVDTTQILTIIVLEGNIVKNKIIAIAEPLDKETLLKLNIVLNTFLQGLDLSEINLALIRQMKEQAAEHSSVVSDILDAVAQAISEEDDIQIFTSGATNILKYPELNDMEKASELLYTLEEKKQLTNLMNNEVSSGENRGIQVYIGNETPVDSMKDCAVVTATYQIEEGVYGKIGIIGPKRMDYEKVVSTLQNLMCQLDDIFKKDNDR.

It belongs to the HrcA family.

Functionally, negative regulator of class I heat shock genes (grpE-dnaK-dnaJ and groELS operons). Prevents heat-shock induction of these operons. The protein is Heat-inducible transcription repressor HrcA of Lachnoclostridium phytofermentans (strain ATCC 700394 / DSM 18823 / ISDg) (Clostridium phytofermentans).